We begin with the raw amino-acid sequence, 125 residues long: Protein ApaG (125 aa).

The ApaG domain occupies 1–125 (MINAPRVCVQ…FRLAIPSLIH (125 aa)).

This chain is Protein ApaG, found in Pectobacterium carotovorum subsp. carotovorum (strain PC1).